We begin with the raw amino-acid sequence, 68 residues long: Purkinje cell protein 4-like protein 1 (68 aa).

Polar residues predominate over residues 1–16 (MSELNTKTPPAANQAS). The segment at 1–42 (MSELNTKTPPAANQASDPEEKGKPGSIKKAEEEEEIDIDLTA) is disordered. Thr8 carries the post-translational modification Phosphothreonine. Basic and acidic residues predominate over residues 18–31 (PEEKGKPGSIKKAE). Residues 45–68 (TEKAALAIQGKFRRFQKRKKDSSS) form the IQ domain.

It belongs to the PCP4 family. Expressed in laminar and nuclear structures of the CNS.

The sequence is that of Purkinje cell protein 4-like protein 1 (Pcp4l1) from Mus musculus (Mouse).